The primary structure comprises 557 residues: Formate--tetrahydrofolate ligase (557 aa).

An ATP-binding site is contributed by 67–74 (TPAGEGKT).

The protein belongs to the formate--tetrahydrofolate ligase family.

It carries out the reaction (6S)-5,6,7,8-tetrahydrofolate + formate + ATP = (6R)-10-formyltetrahydrofolate + ADP + phosphate. The protein operates within one-carbon metabolism; tetrahydrofolate interconversion. The chain is Formate--tetrahydrofolate ligase from Cereibacter sphaeroides (strain ATCC 17025 / ATH 2.4.3) (Rhodobacter sphaeroides).